A 115-amino-acid polypeptide reads, in one-letter code: Salivary anti-complement protein (115 aa).

The N-terminal stretch at 1–22 (MKFFYLIFSAIFFLADPALVKC) is a signal peptide. 3 disulfides stabilise this stretch: Cys26–Cys108, Cys41–Cys92, and Cys83–Cys101.

In terms of assembly, may form multimers. As to expression, salivary gland (at protein level).

The protein localises to the secreted. Functionally, salivary protein that inhibits the classical pathway of complement system activation in the host while having no inhibitory effect on the alternative or lectin pathways. Prevent cleavage of host C4 and consequently impairs the activation of factors downstream of C4b in the complement cascade. The chain is Salivary anti-complement protein from Lutzomyia longipalpis (Sand fly).